Reading from the N-terminus, the 725-residue chain is MEPGDAARPGSGRATGAPPPRLLLLPLLLGWGLRVAAAASASSSGAAAEDSSAMEELATEKEAEESHRQDSVSLLTFILLLTLTILTIWLFKHRRVRFLHETGLAMIYGLIVGVILRYGTPATSGRDKSLSCTQEDRAFSTLLVNVSGKFFEYTLKGEISPGKINSVEQNDMLRKVTFDPEVFFNILLPPIIFHAGYSLKKRHFFRNLGSILAYAFLGTAVSCFIIGNLMYGVVKLMKIMGQLSDKFYYTDCLFFGAIISATDPVTVLAIFNELHADVDLYALLFGESVLNDAVAIVLSSSIVAYQPAGLNTHAFDAAAFFKSVGIFLGIFSGSFTMGAVTGVNANVTKFTKLHCFPLLETALFFLMSWSTFLLAEACGFTGVVAVLFCGITQAHYTYNNLSVESRSRTKQLFEVLHFLAENFIFSYMGLALFTFQKHVFSPIFIIGAFVAIFLGRAAHIYPLSFFLNLGRRHKIGWNFQHMMMFSGLRGAMAFALAIRDTASYARQMMFTTTLLIVFFTVWIIGGGTTPMLSWLNIRVGVEEPSEEDQNEHHWQYFRVGVDPDQDPPPNNDSFQVLQGDGPDSARGNRTKQESAWIFRLWYSFDHNYLKPILTHSGPPLTTTLPAWCGLLARCLTSPQVYDNQEPLREEDSDFILTEGDLTLTYGDSTVTANGSSSSHTASTSLEGSRRTKSSSEEVLERDLGMGDQKVSSRGTRLVFPLEDNA.

The interval 1–20 is disordered; that stretch reads MEPGDAARPGSGRATGAPPP. Topologically, residues 1–21 are cytoplasmic; that stretch reads MEPGDAARPGSGRATGAPPPR. Residues 22 to 42 traverse the membrane as a helical segment; that stretch reads LLLLPLLLGWGLRVAAAASAS. Residues 43-70 are Lumenal-facing; that stretch reads SSGAAAEDSSAMEELATEKEAEESHRQD. A helical membrane pass occupies residues 71–91; sequence SVSLLTFILLLTLTILTIWLF. Topologically, residues 92-95 are cytoplasmic; the sequence is KHRR. Residues 96–116 traverse the membrane as a helical segment; it reads VRFLHETGLAMIYGLIVGVIL. Residues 117 to 175 lie on the Lumenal side of the membrane; that stretch reads RYGTPATSGRDKSLSCTQEDRAFSTLLVNVSGKFFEYTLKGEISPGKINSVEQNDMLRK. The N-linked (GlcNAc...) asparagine glycan is linked to asparagine 145. The helical transmembrane segment at 176 to 196 threads the bilayer; that stretch reads VTFDPEVFFNILLPPIIFHAG. Topologically, residues 197–210 are cytoplasmic; the sequence is YSLKKRHFFRNLGS. The chain crosses the membrane as a helical span at residues 211–231; sequence ILAYAFLGTAVSCFIIGNLMY. Residues 232–251 lie on the Lumenal side of the membrane; the sequence is GVVKLMKIMGQLSDKFYYTD. The chain crosses the membrane as a helical span at residues 252–272; that stretch reads CLFFGAIISATDPVTVLAIFN. Topologically, residues 273–277 are cytoplasmic; it reads ELHAD. A helical membrane pass occupies residues 278-298; sequence VDLYALLFGESVLNDAVAIVL. Residues 299–322 lie on the Lumenal side of the membrane; it reads SSSIVAYQPAGLNTHAFDAAAFFK. Residues 323–343 form a helical membrane-spanning segment; that stretch reads SVGIFLGIFSGSFTMGAVTGV. The Cytoplasmic segment spans residues 344 to 349; that stretch reads NANVTK. 2 consecutive transmembrane segments (helical) span residues 350-370 and 371-391; these read FTKL…MSWS and TFLL…FCGI. The Cytoplasmic portion of the chain corresponds to 392–414; the sequence is TQAHYTYNNLSVESRSRTKQLFE. Residues 415–435 form a helical membrane-spanning segment; sequence VLHFLAENFIFSYMGLALFTF. The Lumenal portion of the chain corresponds to 436 to 442; it reads QKHVFSP. Residues 443-463 traverse the membrane as a helical segment; that stretch reads IFIIGAFVAIFLGRAAHIYPL. Over 464–474 the chain is Cytoplasmic; that stretch reads SFFLNLGRRHK. Residues 475-497 traverse the membrane as a helical segment; that stretch reads IGWNFQHMMMFSGLRGAMAFALA. Over 498 to 513 the chain is Lumenal; the sequence is IRDTASYARQMMFTTT. Residues 514–534 form a helical membrane-spanning segment; that stretch reads LLIVFFTVWIIGGGTTPMLSW. 2 required for trans-Golgi network localization regions span residues 533 to 559 and 563 to 568; these read SWLN…YFRV and PDQDPP. Over 535–725 the chain is Cytoplasmic; it reads LNIRVGVEEP…RLVFPLEDNA (191 aa). Serine 545 is modified (phosphoserine). Disordered regions lie at residues 567 to 590 and 669 to 714; these read PPPN…GNRT and TVTA…SSRG. Positions 675–684 are enriched in low complexity; that stretch reads SSSSHTASTS. Basic and acidic residues predominate over residues 687–704; that stretch reads GSRRTKSSSEEVLERDLG.

The protein belongs to the monovalent cation:proton antiporter 1 (CPA1) transporter (TC 2.A.36) family. Interacts with SCAMP1, SCAMP2 and SCAMP5; may participate in its shuttling from trans-Golgi network to recycling endosomes. N-glycosylated. Ubiquitously expressed.

Its subcellular location is the golgi apparatus. It is found in the trans-Golgi network membrane. The protein resides in the recycling endosome membrane. It localises to the cell membrane. It carries out the reaction Na(+)(in) + H(+)(out) = Na(+)(out) + H(+)(in). The catalysed reaction is K(+)(in) + H(+)(out) = K(+)(out) + H(+)(in). Its activity is regulated as follows. Inhibited by benzamil and quinine but not by amiloride. Golgi Na(+), K(+)/(H+) antiporter. Mediates the electoneutral influx of Na(+) or K(+) in exchange for H(+). May contribute to the regulation of Golgi apparatus volume and pH. This is Sodium/hydrogen exchanger 7 (SLC9A7) from Homo sapiens (Human).